We begin with the raw amino-acid sequence, 55 residues long: Preprotein translocase subunit SecG (55 aa).

The Cytoplasmic portion of the chain corresponds to 1 to 29 (MAKKSGSGLQSSAGLMRYYEADKNAVQVQ). Residues 30-51 (PKVVLIVGAIVGIAVLFLSAVN) form a helical membrane-spanning segment. At 52–55 (GFWP) the chain is on the extracellular side.

The protein belongs to the SEC61-beta family. In terms of assembly, component of the protein translocase complex. Heterotrimer consisting of alpha (SecY), beta (SecG) and gamma (SecE) subunits. Can form oligomers of the heterotrimer.

It localises to the cell membrane. Functionally, involved in protein export. The function of the beta subunit is unknown, but it may be involved in stabilization of the trimeric complex. This Methanosarcina barkeri (strain Fusaro / DSM 804) protein is Preprotein translocase subunit SecG.